A 199-amino-acid chain; its full sequence is Recombination protein RecR (199 aa).

The segment at 58–73 (CSVCSNLTDIDPCPLC) adopts a C4-type zinc-finger fold. A Toprim domain is found at 81 to 176 (TVICVVQDPR…KATRIAHGIP (96 aa)).

The protein belongs to the RecR family.

Functionally, may play a role in DNA repair. It seems to be involved in an RecBC-independent recombinational process of DNA repair. It may act with RecF and RecO. The sequence is that of Recombination protein RecR from Ruminiclostridium cellulolyticum (strain ATCC 35319 / DSM 5812 / JCM 6584 / H10) (Clostridium cellulolyticum).